The following is a 266-amino-acid chain: Type III pantothenate kinase (266 aa).

Aspartate 9–lysine 16 is a binding site for ATP. Residues tyrosine 96 and glycine 103–arginine 106 contribute to the substrate site. Catalysis depends on aspartate 105, which acts as the Proton acceptor. Threonine 129 provides a ligand contact to ATP. Threonine 189 lines the substrate pocket.

Belongs to the type III pantothenate kinase family. As to quaternary structure, homodimer. The cofactor is NH4(+). Requires K(+) as cofactor.

The protein localises to the cytoplasm. The enzyme catalyses (R)-pantothenate + ATP = (R)-4'-phosphopantothenate + ADP + H(+). The protein operates within cofactor biosynthesis; coenzyme A biosynthesis; CoA from (R)-pantothenate: step 1/5. In terms of biological role, catalyzes the phosphorylation of pantothenate (Pan), the first step in CoA biosynthesis. This chain is Type III pantothenate kinase, found in Burkholderia cenocepacia (strain ATCC BAA-245 / DSM 16553 / LMG 16656 / NCTC 13227 / J2315 / CF5610) (Burkholderia cepacia (strain J2315)).